The chain runs to 365 residues: 3-dehydroquinate synthase (365 aa).

Residues 69-74, 103-107, 127-128, K140, and K149 contribute to the NAD(+) site; these read DGEAHK, GVIGD, and TT. E182, H245, and H262 together coordinate Zn(2+).

The protein belongs to the sugar phosphate cyclases superfamily. Dehydroquinate synthase family. The cofactor is NAD(+). Requires Co(2+) as cofactor. Zn(2+) is required as a cofactor.

It localises to the cytoplasm. It carries out the reaction 7-phospho-2-dehydro-3-deoxy-D-arabino-heptonate = 3-dehydroquinate + phosphate. It participates in metabolic intermediate biosynthesis; chorismate biosynthesis; chorismate from D-erythrose 4-phosphate and phosphoenolpyruvate: step 2/7. Functionally, catalyzes the conversion of 3-deoxy-D-arabino-heptulosonate 7-phosphate (DAHP) to dehydroquinate (DHQ). This Pseudomonas putida (strain ATCC 47054 / DSM 6125 / CFBP 8728 / NCIMB 11950 / KT2440) protein is 3-dehydroquinate synthase.